We begin with the raw amino-acid sequence, 105 residues long: Malonate decarboxylase acyl carrier protein (105 aa).

Ser28 is subject to O-(phosphoribosyl dephospho-coenzyme A)serine.

The protein belongs to the MdcC family. Covalently binds the prosthetic group of malonate decarboxylase.

The protein localises to the cytoplasm. Subunit of malonate decarboxylase, it is an acyl carrier protein to which acetyl and malonyl thioester residues are bound via a 2'-(5''-phosphoribosyl)-3'-dephospho-CoA prosthetic group and turn over during the catalytic mechanism. The sequence is that of Malonate decarboxylase acyl carrier protein from Xanthomonas campestris pv. campestris (strain 8004).